The primary structure comprises 332 residues: L-lactate dehydrogenase A chain (332 aa).

NAD(+) is bound by residues 29–57 and Arg-99; that span reads GMVG…MEDK. Residues Arg-106, Asn-138, and Arg-169 each contribute to the substrate site. Asn-138 serves as a coordination point for NAD(+). Catalysis depends on His-193, which acts as the Proton acceptor. Residue Thr-248 participates in substrate binding.

This sequence belongs to the LDH/MDH superfamily. LDH family. In terms of assembly, homotetramer.

The protein localises to the cytoplasm. It catalyses the reaction (S)-lactate + NAD(+) = pyruvate + NADH + H(+). It functions in the pathway fermentation; pyruvate fermentation to lactate; (S)-lactate from pyruvate: step 1/1. Functionally, interconverts simultaneously and stereospecifically pyruvate and lactate with concomitant interconversion of NADH and NAD(+). The polypeptide is L-lactate dehydrogenase A chain (ldha) (Rhinogobiops nicholsii (Blackeye goby)).